The following is a 254-amino-acid chain: uncharacterized protein (254 aa).

This sequence belongs to the MtxX family.

This is an uncharacterized protein from Methanopyrus kandleri (strain AV19 / DSM 6324 / JCM 9639 / NBRC 100938).